The sequence spans 539 residues: Acid-sensing ion channel 4 (539 aa).

Topologically, residues Met1–Thr68 are cytoplasmic. Residues Leu69–Ala89 traverse the membrane as a helical segment. Over Arg90–Ala438 the chain is Extracellular. 2 disulfides stabilise this stretch: Cys118–Cys202 and Cys180–Cys187. N-linked (GlcNAc...) asparagine glycosylation is found at Asn191, Asn243, Asn341, and Asn376. 5 cysteine pairs are disulfide-bonded: Cys296-Cys375, Cys318-Cys371, Cys322-Cys369, Cys331-Cys353, and Cys333-Cys345. The chain crosses the membrane as a helical span at residues Leu439 to Leu459. Positions Gly452–Ser454 match the GAS motif; ion selectivity filter motif. Residues Glu460–Cys539 are Cytoplasmic-facing. Positions Lys500 to Gly531 are disordered.

This sequence belongs to the amiloride-sensitive sodium channel (TC 1.A.6) family. ASIC4 subfamily. As to quaternary structure, homotrimer. Heterotrimer; with other ASIC proteins producing functional channels.

It localises to the cell membrane. Functionally, does not exhibit measurable stand-alone pH-gated sodium channel activity but may form pH-gated heterotrimeric sodium channels. Its activity could also depend on alternative gating mechanisms. This chain is Acid-sensing ion channel 4, found in Mus musculus (Mouse).